Reading from the N-terminus, the 485-residue chain is Malonate-semialdehyde dehydrogenase (485 aa).

NAD(+)-binding residues include F155, K179, E182, R183, and S232. Catalysis depends on C287, which acts as the Nucleophile. E386 is a binding site for NAD(+).

It belongs to the aldehyde dehydrogenase family. IolA subfamily. In terms of assembly, homotetramer.

It carries out the reaction 3-oxopropanoate + NAD(+) + CoA + H2O = hydrogencarbonate + acetyl-CoA + NADH + H(+). It catalyses the reaction 2-methyl-3-oxopropanoate + NAD(+) + CoA + H2O = propanoyl-CoA + hydrogencarbonate + NADH + H(+). It functions in the pathway polyol metabolism; myo-inositol degradation into acetyl-CoA; acetyl-CoA from myo-inositol: step 7/7. In terms of biological role, catalyzes the oxidation of malonate semialdehyde (MSA) and methylmalonate semialdehyde (MMSA) into acetyl-CoA and propanoyl-CoA, respectively. Is involved in a myo-inositol catabolic pathway. Bicarbonate, and not CO2, is the end-product of the enzymatic reaction. This Halalkalibacterium halodurans (strain ATCC BAA-125 / DSM 18197 / FERM 7344 / JCM 9153 / C-125) (Bacillus halodurans) protein is Malonate-semialdehyde dehydrogenase.